Consider the following 42-residue polypeptide: Delta-hexatoxin-Hv1b (42 aa).

Disulfide bonds link cysteine 1–cysteine 15, cysteine 8–cysteine 20, cysteine 14–cysteine 31, and cysteine 16–cysteine 42.

Belongs to the neurotoxin 06 (delta-actx) family. Expressed by the venom gland.

The protein localises to the secreted. Lethal neurotoxin. Slows the inactivation of tetrodotoxin-sensitive voltage-gated sodium channels (Nav) by binding to site 3 of the channel, resulting in repetitive firing in autonomic and motor nerve fibers. In Hadronyche versuta (Blue mountains funnel-web spider), this protein is Delta-hexatoxin-Hv1b.